A 541-amino-acid chain; its full sequence is Sorting nexin-27 (541 aa).

The tract at residues 1–26 (MADEDGEGIHPAAPHRNGGGGGGGGS) is disordered. Residues 17-26 (NGGGGGGGGS) show a composition bias toward gly residues. The region spanning 43-136 (VVRIVKSESG…ELILTVLSVP (94 aa)) is the PDZ domain. A phosphoserine mark is found at S51 and S62. Residues 161–269 (QAVPISVPTY…EFLSESDENY (109 aa)) form the PX domain. The Ras-associating domain maps to 273-362 (SDVELRVALP…TCLTIRKWLF (90 aa)). The FERM-like region F1 stretch occupies residues 273 to 362 (SDVELRVALP…TCLTIRKWLF (90 aa)). The segment at 373–421 (NDLAVTYFFHQAVDDVKKGYIKAEEKSYQLQKLYEQRKMVMYLNMLRTC) is FERM-like region F2. The tract at residues 425–525 (NEIIFPHCAC…RVFCELKWRK (101 aa)) is FERM-like region F3.

Core component of the SNX27-retromer, a multiprotein complex composed of SNX27, the WASH complex and the retromer complex. Interacts (via PDZ domain) with a number of target transmembrane proteins (via PDZ-binding motif): ABCC4, ADRB2, ARHGEF7, GRIA1, GRIA2, GRIN1, GRIN2A GRIN2C, KCNJ6, KCNJ9 and SLC2A1/GLUT1. Interacts (via the FERM-like regions) with the WASH complex. Interacts with SNX1. Interacts with CYTIP. Interacts with DGKZ. Interacts with MCC. Interacts (via PDZ domains) with SLC9A3; directs SLC9A3 membrane insertion from early endosomes to the plasma membrane.

The protein localises to the early endosome membrane. Its subcellular location is the cytoplasm. It is found in the cytosol. Involved in the retrograde transport from endosome to plasma membrane, a trafficking pathway that promotes the recycling of internalized transmembrane proteins. Following internalization, endocytosed transmembrane proteins are delivered to early endosomes and recycled to the plasma membrane instead of being degraded in lysosomes. SNX27 specifically binds and directs sorting of a subset of transmembrane proteins containing a PDZ-binding motif at the C-terminus: following interaction with target transmembrane proteins, associates with the retromer complex, preventing entry into the lysosomal pathway, and promotes retromer-tubule based plasma membrane recycling. SNX27 also binds with the WASH complex. Interacts with membranes containing phosphatidylinositol-3-phosphate (PtdIns(3P)). May participate in establishment of natural killer cell polarity. Recruits CYTIP to early endosomes. This is Sorting nexin-27 (SNX27) from Bos taurus (Bovine).